The following is a 290-amino-acid chain: Concanavalin-A (290 aa).

The signal sequence occupies residues 1 to 29; sequence MAISKKSSLFLPIFTFITMFLMVVNKVSS. A carbohydrate contacts are provided by Asp119 and Arg139. Asp119 contributes to the Ca(2+) binding site. A propeptide spanning residues 149-163 is cleaved from the precursor; the sequence is VIRNSTTIDFNAAYN. Asn152 carries N-linked (GlcNAc...) asparagine glycosylation. The Mn(2+) site is built by Glu171 and Asp173. Positions 173, 175, 177, and 182 each coordinate Ca(2+). Asp182 and His187 together coordinate Mn(2+). Position 262-263 (262-263) interacts with a carbohydrate; it reads LY. A propeptide spanning residues 282 to 290 is cleaved from the precursor; the sequence is EIPDIATVV.

It belongs to the leguminous lectin family. Homotetramer. Post-translationally, the mature chain consists of residues 164-281 followed by 30-148. To form a mature chain the precursor undergoes further post-translational modification after removal of the signal sequence; cleavage after Asn at positions Asn-148, Asn-163, and Asn-281 is followed by transposition and ligation (By formation of a new peptide bond) of residues 164-281 and 30-148.

Functionally, glucose/D-mannose/rhamnose specific lectin. Has hemagglutinating activity towards rabbit erythrocytes. Has mitogenic activity towards murine splenocytes that is inhibited by glucose. Inhibits HIV-1 reverse transcriptase with an IC(50) of 35 uM. Has a potent antiproliferative activity against L1210 leukemia cells in vitro that is not inhibited by glucose. Inhibits translation in cell-free rabbit reticulocyte system with an IC(50) of 2.08 uM. Lacks anti-fungal activity against M.arachidicola, B.cenera and F.oxysporum. This chain is Concanavalin-A, found in Canavalia gladiata (Sword bean).